The chain runs to 327 residues: Small ribosomal subunit protein RACK1 (327 aa).

WD repeat units lie at residues 13–44 (AHTD…IVWK), 61–91 (GHSH…RLWD), 103–133 (GHTK…KLWN), 148–180 (GHRD…KVWN), 192–222 (GHTG…LLWD), 233–262 (EANS…KIWD), and 293–323 (RKVI…RVWG).

The protein belongs to the WD repeat G protein beta family. Ribosomal protein RACK1 subfamily.

The chain is Small ribosomal subunit protein RACK1 (GB1) from Brassica napus (Rape).